The sequence spans 798 residues: Penicillin-binding protein 1A (798 aa).

Topologically, residues methionine 1 to cysteine 9 are cytoplasmic. The helical; Signal-anchor for type II membrane protein transmembrane segment at phenylalanine 10–valine 30 threads the bilayer. Topologically, residues threonine 31–phenylalanine 798 are periplasmic. The tract at residues leucine 50–glutamate 218 is transglycosylase. The active-site Proton donor; for transglycosylase activity is glutamate 88. Residues arginine 378–aspartate 700 are transpeptidase. Residue serine 461 is the Acyl-ester intermediate; for transpeptidase activity of the active site. Residues glycine 738–phenylalanine 798 form a disordered region. Basic and acidic residues predominate over residues alanine 768 to methionine 777. Residues leucine 783–phenylalanine 798 are compositionally biased toward polar residues.

This sequence in the N-terminal section; belongs to the glycosyltransferase 51 family. In the C-terminal section; belongs to the transpeptidase family.

It is found in the cell inner membrane. The enzyme catalyses [GlcNAc-(1-&gt;4)-Mur2Ac(oyl-L-Ala-gamma-D-Glu-L-Lys-D-Ala-D-Ala)](n)-di-trans,octa-cis-undecaprenyl diphosphate + beta-D-GlcNAc-(1-&gt;4)-Mur2Ac(oyl-L-Ala-gamma-D-Glu-L-Lys-D-Ala-D-Ala)-di-trans,octa-cis-undecaprenyl diphosphate = [GlcNAc-(1-&gt;4)-Mur2Ac(oyl-L-Ala-gamma-D-Glu-L-Lys-D-Ala-D-Ala)](n+1)-di-trans,octa-cis-undecaprenyl diphosphate + di-trans,octa-cis-undecaprenyl diphosphate + H(+). It catalyses the reaction Preferential cleavage: (Ac)2-L-Lys-D-Ala-|-D-Ala. Also transpeptidation of peptidyl-alanyl moieties that are N-acyl substituents of D-alanine.. Its pathway is cell wall biogenesis; peptidoglycan biosynthesis. Cell wall formation. Synthesis of cross-linked peptidoglycan from the lipid intermediates. The enzyme has a penicillin-insensitive transglycosylase N-terminal domain (formation of linear glycan strands) and a penicillin-sensitive transpeptidase C-terminal domain (cross-linking of the peptide subunits). This chain is Penicillin-binding protein 1A (mrcA), found in Neisseria meningitidis serogroup A / serotype 4A (strain DSM 15465 / Z2491).